The primary structure comprises 449 residues: Aspartyl protease AED3 (449 aa).

An N-terminal signal peptide occupies residues 1–23 (MASSSLHFFFFLTLLLPFTFTTA). Residues 104–444 (YVVRAKLGTP…DVPNSRIGIA (341 aa)) enclose the Peptidase A1 domain. Residue Asp122 is part of the active site. Cys132 and Cys138 are joined by a disulfide. Asn140, Asn148, Asn184, Asn211, and Asn297 each carry an N-linked (GlcNAc...) asparagine glycan. Asp328 is an active-site residue. Asn353 is a glycosylation site (N-linked (GlcNAc...) asparagine). An intrachain disulfide couples Cys366 to Cys405.

This sequence belongs to the peptidase A1 family.

It localises to the secreted. Its subcellular location is the extracellular space. The protein resides in the apoplast. The sequence is that of Aspartyl protease AED3 from Arabidopsis thaliana (Mouse-ear cress).